A 290-amino-acid chain; its full sequence is Homeobox protein HMX3-B (290 aa).

2 disordered regions span residues 1 to 41 and 96 to 169; these read MADS…GSSK and EKVN…KKKT. The span at 107 to 124 shows a compositional bias: basic and acidic residues; sequence LDRHTPDPPKSDQESKEE. The span at 125–137 shows a compositional bias: acidic residues; sequence SADDEIALEESDA. The span at 138–162 shows a compositional bias: basic and acidic residues; the sequence is EEPKKETDQEDDWMRKGEDLESDKK. Residues 166-225 constitute a DNA-binding region (homeobox); it reads KKKTRTVFSRSQVFQLESTFDIKRYLSSSERAGLAASLHLTETQVKIWFQNRRNKWKRQL.

It belongs to the HMX homeobox family. Expressed in the ear placode and vesicle and in cells forming the vestibulo-acoustic ganglion.

The protein localises to the nucleus. In terms of biological role, transcription factor involved in specification of neuronal cell types and which is required for inner ear and hypothalamus development. Binds to the 5'-CAAGTG-3' core sequence. The polypeptide is Homeobox protein HMX3-B (hmx3b) (Oryzias latipes (Japanese rice fish)).